Consider the following 49-residue polypeptide: Heme exporter protein C (49 aa).

This sequence belongs to the CcmC/CycZ/HelC family.

Its subcellular location is the cell inner membrane. Required for the export of heme to the periplasm for the biogenesis of c-type cytochromes. The chain is Heme exporter protein C from Rhizobium leguminosarum bv. viciae.